The primary structure comprises 463 residues: DNA polymerase subunit gamma-2, mitochondrial (463 aa).

Residues 1–44 constitute a mitochondrion transit peptide; that stretch reads MLLTLKNTGQLLVAACSKVARSLAKYHPRVNHHRHCVWCSKRGL.

As to quaternary structure, heterotrimer composed of a catalytic subunit and a homodimer of accessory subunits.

The protein localises to the mitochondrion. In terms of biological role, mitochondrial polymerase processivity subunit. It regulates the polymerase and exonuclease activities promoting processive DNA synthesis. Binds to ss-DNA. In Xenopus laevis (African clawed frog), this protein is DNA polymerase subunit gamma-2, mitochondrial (polg2).